Reading from the N-terminus, the 816-residue chain is Neuronal PAS domain-containing protein 2 (816 aa).

The segment covering 1-10 (MDEDEKDRAK) has biased composition (basic and acidic residues). The interval 1–21 (MDEDEKDRAKRASRNKSEKKR) is disordered. Residues 1 to 61 (MDEDEKDRAK…VIGFLQKHNE (61 aa)) form a sufficient for heterodimer formation with BMAL1, E-box binding and for the effect of NADPH region. A bHLH domain is found at 9–59 (AKRASRNKSEKKRRDQFNVLIKELSSMLPGNTRKMDKTTVLEKVIGFLQKH). The 71-residue stretch at 82–152 (NEEFTQLMLE…KILSSHMLVT (71 aa)) folds into the PAS 1 domain. The heme b site is built by His-119 and His-171. In terms of domain architecture, PAS 2 spans 237-307 (FLKEMCVADE…RCHQHLMQFG (71 aa)). The 44-residue stretch at 311 to 354 (SCCYRFLTKGQQWIWLQTHYYITYHQWNSKPEFIVCTHSVVSYA) folds into the PAC domain. Disordered stretches follow at residues 364–431 (LALE…STPT), 610–639 (ISAQ…SQFS), 685–705 (QPMM…RTGR), and 742–816 (PSFP…LSES). Over residues 400–413 (SGLPSSPSPSASSR) the composition is skewed to low complexity. A compositionally biased stretch (polar residues) spans 420 to 431 (HTAMSEPTSTPT). Over residues 623-639 (LLPASGRSLSSLPSQFS) the composition is skewed to low complexity. A compositionally biased stretch (low complexity) spans 745–759 (PASRPSPLQPAQAQQ). Residues 780–789 (LLSTFSQQPG) show a composition bias toward polar residues. Positions 806–816 (PSRRVSRLSES) are enriched in basic residues.

In terms of assembly, component of the circadian clock oscillator which includes the CRY proteins, CLOCK or NPAS2, BMAL1 or BMAL2, CSNK1D and/or CSNK1E, TIMELESS and the PER proteins. Efficient DNA binding requires dimerization with another bHLH protein. Interacts with NCOA3, KAT2B and CREBBP. Forms a heterodimer with BMAL1 and this heterodimerization is required for E-box-dependent transactivation. Interacts with EP300. Heme is required as a cofactor. Expressed in the retinal ganglion cells (at protein level). Expressed in the hypothalamic suprachiasmatic nuclei (SCN) of the brain. Also found in spinal cord, and to a lesser extent in colon, small intestine and uterus. Exhibits a diurnal variation in its expression in the brain.

Its subcellular location is the nucleus. Carbon monoxide (CO) and the redox state of the cell can modulate the transcriptional activity of the NPAS2-BMAL1 heterodimer. NADH and NADPH enhance the DNA-binding activity of the heterodimer whereas CO binds the heme group in NPAS2 and inhibits the DNA-binding activity of the heterodimer. Functionally, transcriptional activator which forms a core component of the circadian clock. The circadian clock, an internal time-keeping system, regulates various physiological processes through the generation of approximately 24 hour circadian rhythms in gene expression, which are translated into rhythms in metabolism and behavior. It is derived from the Latin roots 'circa' (about) and 'diem' (day) and acts as an important regulator of a wide array of physiological functions including metabolism, sleep, body temperature, blood pressure, endocrine, immune, cardiovascular, and renal function. Consists of two major components: the central clock, residing in the suprachiasmatic nucleus (SCN) of the brain, and the peripheral clocks that are present in nearly every tissue and organ system. Both the central and peripheral clocks can be reset by environmental cues, also known as Zeitgebers (German for 'timegivers'). The predominant Zeitgeber for the central clock is light, which is sensed by retina and signals directly to the SCN. The central clock entrains the peripheral clocks through neuronal and hormonal signals, body temperature and feeding-related cues, aligning all clocks with the external light/dark cycle. Circadian rhythms allow an organism to achieve temporal homeostasis with its environment at the molecular level by regulating gene expression to create a peak of protein expression once every 24 hours to control when a particular physiological process is most active with respect to the solar day. Transcription and translation of core clock components (CLOCK, NPAS2, BMAL1, BMAL2, PER1, PER2, PER3, CRY1 and CRY2) plays a critical role in rhythm generation, whereas delays imposed by post-translational modifications (PTMs) are important for determining the period (tau) of the rhythms (tau refers to the period of a rhythm and is the length, in time, of one complete cycle). A diurnal rhythm is synchronized with the day/night cycle, while the ultradian and infradian rhythms have a period shorter and longer than 24 hours, respectively. Disruptions in the circadian rhythms contribute to the pathology of cardiovascular diseases, cancer, metabolic syndromes and aging. A transcription/translation feedback loop (TTFL) forms the core of the molecular circadian clock mechanism. Transcription factors, CLOCK or NPAS2 and BMAL1 or BMAL2, form the positive limb of the feedback loop, act in the form of a heterodimer and activate the transcription of core clock genes and clock-controlled genes (involved in key metabolic processes), harboring E-box elements (5'-CACGTG-3') within their promoters. The core clock genes: PER1/2/3 and CRY1/2 which are transcriptional repressors form the negative limb of the feedback loop and interact with the CLOCK|NPAS2-BMAL1|BMAL2 heterodimer inhibiting its activity and thereby negatively regulating their own expression. This heterodimer also activates nuclear receptors NR1D1/2 and RORA/B/G, which form a second feedback loop and which activate and repress BMAL1 transcription, respectively. The NPAS2-BMAL1 heterodimer positively regulates the expression of MAOA, F7 and LDHA and modulates the circadian rhythm of daytime contrast sensitivity by regulating the rhythmic expression of adenylate cyclase type 1 (ADCY1) in the retina. NPAS2 plays an important role in sleep homeostasis and in maintaining circadian behaviors in normal light/dark and feeding conditions and in the effective synchronization of feeding behavior with scheduled food availability. Regulates the gene transcription of key metabolic pathways in the liver and is involved in DNA damage response by regulating several cell cycle and DNA repair genes. Controls the circadian rhythm of NR0B2 expression by binding rhythmically to its promoter. Mediates the diurnal variation in the expression of GABARA1 receptor in the brain and contributes to the regulation of anxiety-like behaviors and GABAergic neurotransmission in the ventral striatum. This is Neuronal PAS domain-containing protein 2 (Npas2) from Mus musculus (Mouse).